A 460-amino-acid chain; its full sequence is CUGBP Elav-like family member 6 (460 aa).

A compositionally biased stretch (low complexity) spans Met-1–Pro-10. Positions Met-1 to Ala-37 are disordered. RRM domains follow at residues Ile-46–Ser-127 and Arg-134–Thr-214. The tract at residues Asn-316–Asn-336 is disordered. The segment covering Gly-319–Asn-336 has biased composition (polar residues). An RRM 3 domain is found at Cys-375–Pro-453.

Belongs to the CELF/BRUNOL family.

The protein resides in the nucleus. The protein localises to the cytoplasm. Functionally, RNA-binding protein implicated in the regulation of pre-mRNA alternative splicing. Mediates exon inclusion and/or exclusion in pre-mRNA that are subject to tissue-specific and developmentally regulated alternative splicing. Specifically activates exon 5 inclusion of TNNT2 in a muscle-specific splicing enhancer (MSE)-dependent manner. Promotes also exon exclusion of INSR pre-mRNA. The protein is CUGBP Elav-like family member 6 (Celf6) of Mus musculus (Mouse).